A 167-amino-acid polypeptide reads, in one-letter code: uncharacterized protein (167 aa).

Positions 1 to 23 are cleaved as a signal peptide; sequence MKRLHKRFLLATFCALFTATLQA. A disulfide bridge links Cys39 with Cys77.

The protein belongs to the fimbrial protein family.

The protein localises to the fimbrium. This is an uncharacterized protein from Escherichia coli (strain K12).